A 395-amino-acid polypeptide reads, in one-letter code: Elongation factor Tu (395 aa).

The tr-type G domain maps to 10–204 (KEHANIGTIG…AVDDFIPTPE (195 aa)). Residues 19–26 (GHVDHGKT) are G1. 19–26 (GHVDHGKT) contacts GTP. T26 is a Mg(2+) binding site. The G2 stretch occupies residues 60 to 64 (GITIN). A G3 region spans residues 81–84 (DCPG). Residues 81 to 85 (DCPGH) and 136 to 139 (NKVD) each bind GTP. The G4 stretch occupies residues 136–139 (NKVD). The tract at residues 174-176 (SAL) is G5.

Belongs to the TRAFAC class translation factor GTPase superfamily. Classic translation factor GTPase family. EF-Tu/EF-1A subfamily. As to quaternary structure, monomer.

The protein localises to the cytoplasm. It catalyses the reaction GTP + H2O = GDP + phosphate + H(+). Its function is as follows. GTP hydrolase that promotes the GTP-dependent binding of aminoacyl-tRNA to the A-site of ribosomes during protein biosynthesis. The sequence is that of Elongation factor Tu from Staphylococcus saprophyticus subsp. saprophyticus (strain ATCC 15305 / DSM 20229 / NCIMB 8711 / NCTC 7292 / S-41).